The chain runs to 319 residues: Methionyl-tRNA formyltransferase (319 aa).

114 to 117 (SLLP) is a binding site for (6S)-5,6,7,8-tetrahydrofolate.

Belongs to the Fmt family.

The enzyme catalyses L-methionyl-tRNA(fMet) + (6R)-10-formyltetrahydrofolate = N-formyl-L-methionyl-tRNA(fMet) + (6S)-5,6,7,8-tetrahydrofolate + H(+). Its function is as follows. Attaches a formyl group to the free amino group of methionyl-tRNA(fMet). The formyl group appears to play a dual role in the initiator identity of N-formylmethionyl-tRNA by promoting its recognition by IF2 and preventing the misappropriation of this tRNA by the elongation apparatus. This is Methionyl-tRNA formyltransferase from Acinetobacter baylyi (strain ATCC 33305 / BD413 / ADP1).